A 1365-amino-acid polypeptide reads, in one-letter code: DNA-directed RNA polymerase subunit beta'' (1365 aa).

Zn(2+)-binding residues include cysteine 224, cysteine 295, cysteine 302, and cysteine 305.

Belongs to the RNA polymerase beta' chain family. RpoC2 subfamily. As to quaternary structure, in plastids the minimal PEP RNA polymerase catalytic core is composed of four subunits: alpha, beta, beta', and beta''. When a (nuclear-encoded) sigma factor is associated with the core the holoenzyme is formed, which can initiate transcription. Requires Zn(2+) as cofactor.

Its subcellular location is the plastid. It is found in the chloroplast. The catalysed reaction is RNA(n) + a ribonucleoside 5'-triphosphate = RNA(n+1) + diphosphate. In terms of biological role, DNA-dependent RNA polymerase catalyzes the transcription of DNA into RNA using the four ribonucleoside triphosphates as substrates. The polypeptide is DNA-directed RNA polymerase subunit beta'' (Fagopyrum esculentum subsp. ancestrale (Wild buckwheat)).